The following is a 207-amino-acid chain: LexA repressor (207 aa).

Positions 28 to 48 (VREIAVAVGLASSSTVHGHLE) form a DNA-binding region, H-T-H motif. Residues Ser129 and Lys167 each act as for autocatalytic cleavage activity in the active site.

The protein belongs to the peptidase S24 family. In terms of assembly, homodimer.

It catalyses the reaction Hydrolysis of Ala-|-Gly bond in repressor LexA.. In terms of biological role, represses a number of genes involved in the response to DNA damage (SOS response), including recA and lexA. In the presence of single-stranded DNA, RecA interacts with LexA causing an autocatalytic cleavage which disrupts the DNA-binding part of LexA, leading to derepression of the SOS regulon and eventually DNA repair. This Oceanobacillus iheyensis (strain DSM 14371 / CIP 107618 / JCM 11309 / KCTC 3954 / HTE831) protein is LexA repressor.